Consider the following 68-residue polypeptide: Antimicrobial peptide UyCT3 (68 aa).

The N-terminal stretch at 1–23 is a signal peptide; it reads MKNQFVLLLLAIVFLQMIFQSDA. At Phe-36 the chain carries Phenylalanine amide. Residues 40–68 constitute a propeptide that is removed on maturation; sequence GLENMDKFDELFDGDLSEADLDFLKELMR.

Belongs to the non-disulfide-bridged peptide (NDBP) superfamily. Short antimicrobial peptide (group 4) family. Post-translationally, the non-amidated UyCT3 does not show antimicrobial activity. Expressed by the venom gland.

It is found in the secreted. It localises to the target cell membrane. Functionally, antimicrobial peptide that inhibits the growth of Gram-positive (S.aureus, MIC=10 uM) and Gram-negative bacteria (E.coli, MIC=15 uM and P.aeruginosa, MIC=6 uM). It also shows 35% of hemolysis when 15 uM are tested (95% at 50 uM). In Urodacus yaschenkoi (Inland robust scorpion), this protein is Antimicrobial peptide UyCT3.